The sequence spans 1648 residues: Putative 1-phosphatidylinositol-3-phosphate 5-kinase FAB1C (1648 aa).

The span at 97–106 (YDKVHPRDSP) shows a compositional bias: basic and acidic residues. Disordered stretches follow at residues 97-116 (YDKV…ATES), 241-276 (QEDH…NDDA), 721-746 (SEIP…ENQL), and 1083-1139 (KTGD…GTSL). Residues 1084–1130 (TGDDNAPRNPEMHDPPKIDRRMQEGSDERDEQSHTDSEANGDNKDPE) show a composition bias toward basic and acidic residues. Residues 1316 to 1639 (NLNNRESEPS…RFRKAMTTYF (324 aa)) enclose the PIPK domain.

As to quaternary structure, component of the PI(3,5)P2 regulatory complex at least composed of ATG18, SAC/FIG4, FAB1 and VAC14. Mg(2+) is required as a cofactor. Mn(2+) serves as cofactor.

It catalyses the reaction a 1,2-diacyl-sn-glycero-3-phospho-(1D-myo-inositol-3-phosphate) + ATP = a 1,2-diacyl-sn-glycero-3-phospho-(1D-myo-inositol-3,5-bisphosphate) + ADP + H(+). Functionally, the PI(3,5)P2 regulatory complex regulates both the synthesis and turnover of phosphatidylinositol 3,5-bisphosphate (PtdIns(3,5)P2). Catalyzes the phosphorylation of phosphatidylinositol 3-phosphate on the fifth hydroxyl of the myo-inositol ring, to form phosphatidylinositol 3,5-bisphosphate. In Arabidopsis thaliana (Mouse-ear cress), this protein is Putative 1-phosphatidylinositol-3-phosphate 5-kinase FAB1C (FAB1C).